A 246-amino-acid chain; its full sequence is Small ribosomal subunit protein uS2 (246 aa).

Belongs to the universal ribosomal protein uS2 family.

The polypeptide is Small ribosomal subunit protein uS2 (Chromohalobacter salexigens (strain ATCC BAA-138 / DSM 3043 / CIP 106854 / NCIMB 13768 / 1H11)).